We begin with the raw amino-acid sequence, 300 residues long: Ribosomal protein L11 methyltransferase (300 aa).

Residues Thr152, Gly173, Asp195, and Asn234 each coordinate S-adenosyl-L-methionine.

This sequence belongs to the methyltransferase superfamily. PrmA family.

It is found in the cytoplasm. The enzyme catalyses L-lysyl-[protein] + 3 S-adenosyl-L-methionine = N(6),N(6),N(6)-trimethyl-L-lysyl-[protein] + 3 S-adenosyl-L-homocysteine + 3 H(+). In terms of biological role, methylates ribosomal protein L11. This is Ribosomal protein L11 methyltransferase from Burkholderia ambifaria (strain ATCC BAA-244 / DSM 16087 / CCUG 44356 / LMG 19182 / AMMD) (Burkholderia cepacia (strain AMMD)).